The chain runs to 513 residues: Histone acetyltransferase KAT5 (513 aa).

Positions 8-65 (IEGCRLPVLRRNQDNEDEWPLAEILSVKDISGRKLFYVHYIDFNKRLDEWVTHERLDL) constitute a Tudor-knot domain. Lysine 52 is subject to N6-acetyllysine. Residues 69–106 (QFPKKEAKTPTKNGLPGSRPGSPEREVPASAQASGKTL) form a disordered region. A Phosphoserine; by GSK3 modification is found at serine 86. Serine 90 is modified (phosphoserine; by CDK1 and CDK9). N6-acetyllysine; by autocatalysis is present on residues lysine 104 and lysine 120. Residues 122–220 (REAIPGGEPD…RMTGSLVSDR (99 aa)) form a disordered region. Over residues 133 to 144 (PLSSSSCLQPNH) the composition is skewed to polar residues. 4 positions are modified to N6-acetyllysine; by autocatalysis: lysine 148, lysine 150, lysine 187, and lysine 189. A Phosphoserine modification is found at serine 199. In terms of domain architecture, MYST-type HAT spans 227–504 (TRMKNIECIE…IDSKCLHFTP (278 aa)). The C2HC MYST-type zinc-finger motif lies at 260–285 (LYLCEFCLKYGRSLKCLQRHLTKCDL). An N6-acetyllysine; by autocatalysis modification is found at lysine 327. The interval 368–513 (ACILTLPPYQ…PKDWSKRGKW (146 aa)) is interaction with ATF2. Acetyl-CoA contacts are provided by residues 370-372 (ILT) and 377-383 (QRRGYGK). Catalysis depends on glutamate 403, which acts as the Proton donor/acceptor. The acetyl-CoA site is built by serine 407 and serine 416. Lysine 430 participates in a covalent cross-link: Glycyl lysine isopeptide (Lys-Gly) (interchain with G-Cter in SUMO1); alternate. Residue lysine 430 forms a Glycyl lysine isopeptide (Lys-Gly) (interchain with G-Cter in SUMO2); alternate linkage. A Glycyl lysine isopeptide (Lys-Gly) (interchain with G-Cter in SUMO1) cross-link involves residue lysine 451.

This sequence belongs to the MYST (SAS/MOZ) family. In terms of assembly, component of the NuA4 histone acetyltransferase complex which contains the catalytic subunit KAT5/TIP60 and the subunits EP400, TRRAP/PAF400, BRD8/SMAP, EPC1, DMAP1/DNMAP1, RUVBL1/TIP49, RUVBL2, ING3, actin, ACTL6A/BAF53A, MORF4L1/MRG15, MORF4L2/MRGX, MRGBP, YEATS4/GAS41, VPS72/YL1 and MEAF6. KAT5/TIP60, EPC1, and ING3 together constitute a minimal HAT complex termed Piccolo NuA4. The NuA4 complex interacts with MYC. Interacts with ATM. Interacts with JADE1. Interacts with PLA2G4A/CPLA2, EDNRA and HDAC7. Interacts with the cytoplasmic tail of APP and APBB1/FE65. Interacts with TRIM24 and TRIM68. Forms a complex with SENP6 and UBE2I in response to UV irradiation. Identified in a complex with HINT1. Interacts with ATF2 and CUL3. Interacts with NR1D2 (via N-terminus). Component of a SWR1-like complex. Interacts with FOXP3. Interacts with ZBTB49. Interacts with SRF. Interacts with ATF3; promoting autoacetylation and deubiquitination by USP7. Interacts with EP300/p300; interaction promotes KAT5 autoacetylation. Interacts with PRKDC; interaction is impaired following KAT5 sumoylation. Interacts with GPR50. Interacts with NME3; this interaction enables recruitment of NME3 at DNA damage sites where it plays a role in the repair of DNA. (Microbial infection) Interacts with HIV-1 TAT. Phosphorylated on Ser-86 and Ser-90; enhanced during G2/M phase. The phosphorylated form has a higher activity. Phosphorylation at Ser-90 by CDK1 or CDK9 is a prerequisite for phosphorylation at Ser-86 by GSK3. Phosphorylation at Ser-86 by GSK3 (GSK3A or GSK3B) activates acetyltransferase and acyltransferase activities. Phosphorylation at Ser-90 by CDK9 promotes KAT5 recruitment to chromatin. Phosphorylation by VRK1 following DNA damage promotes KAT5 association with chromatin and histone acetyltransferase activity. In terms of processing, autoacetylated. Autoacetylation is required for histone acetyltransferase activity. Autoacetylation at Lys-327 is facilitated by interaction with EP300/p300: it prevents ubiquitination and subsequent degradation by the proteasome and promotes acetylation of target proteins. Deacetylated by HDAC3 and SIRT1. Deacetylation by HDAC3 promotes its ubiquitination and cytoplasmic localization. Post-translationally, sumoylated by UBE2I at Lys-430 and Lys-451, leading to increase of its histone acetyltransferase activity in UV-induced DNA damage response, as well as its translocation to nuclear bodies. Sumoylation with SUMO2 by PIAS4 at Lys-430 promotes repair of DNA double-strand breaks (DSBs) via homologous recombination (HR). Sumoylation by PIAS4 impairs interaction with PRKDC, inhibiting non-homologous end joining (NHEJ)-mediated repair of DSBs, thereby facilitating HR. Desumoylated by SENP3. Ubiquitinated by MDM2, leading to its proteasome-dependent degradation. Ubiquitination is prevented by autoacetylation at Lys-327. Ubiquitinated following deacetylation by HDAC3, leading to cytoplasmic localization. Deubiquitinated by USP7 following interaction with ATF3, promoting its stabilization. In terms of processing, (Microbial infection) In case of HIV-1 infection, interaction with the viral Tat protein leads to KAT5 polyubiquitination and targets it to degradation.

The protein localises to the nucleus. It is found in the chromosome. Its subcellular location is the cytoplasm. The protein resides in the centromere. It localises to the kinetochore. The protein localises to the cytoskeleton. It is found in the spindle pole. Its subcellular location is the nucleolus. The protein resides in the perinuclear region. It carries out the reaction L-lysyl-[histone] + acetyl-CoA = N(6)-acetyl-L-lysyl-[histone] + CoA + H(+). The enzyme catalyses L-lysyl-[protein] + acetyl-CoA = N(6)-acetyl-L-lysyl-[protein] + CoA + H(+). It catalyses the reaction (2E)-butenoyl-CoA + L-lysyl-[protein] = N(6)-(2E)-butenoyl-L-lysyl-[protein] + CoA + H(+). The catalysed reaction is 2-hydroxyisobutanoyl-CoA + L-lysyl-[protein] = N(6)-(2-hydroxyisobutanoyl)-L-lysyl-[protein] + CoA + H(+). It carries out the reaction (S)-lactoyl-CoA + L-lysyl-[protein] = N(6)-[(S)-lactoyl]-L-lysyl-[protein] + CoA + H(+). Its activity is regulated as follows. Acyltransferase and acetyltransferase activities are activated by phosphorylation and autoacetylation. Autoacetylation activates the histone acetyltransferase activity. Catalytic subunit of the NuA4 histone acetyltransferase complex, a multiprotein complex involved in transcriptional activation of select genes principally by acetylation of nucleosomal histones H2A and H4. Histone acetylation alters nucleosome-DNA interactions and promotes interaction of the modified histones with other proteins which positively regulate transcription. The NuA4 histone acetyltransferase complex is required for the activation of transcriptional programs associated with proto-oncogene mediated growth induction, tumor suppressor mediated growth arrest and replicative senescence, apoptosis, and DNA repair. The NuA4 complex plays a direct role in repair of DNA double-strand breaks (DSBs) by promoting homologous recombination (HR): the complex inhibits TP53BP1 binding to chromatin via MBTD1, which recognizes and binds histone H4 trimethylated at 'Lys-20' (H4K20me), and KAT5 that catalyzes acetylation of 'Lys-15' of histone H2A (H2AK15ac), thereby blocking the ubiquitination mark required for TP53BP1 localization at DNA breaks. Also involved in DSB repair by mediating acetylation of 'Lys-5' of histone H2AX (H2AXK5ac), promoting NBN/NBS1 assembly at the sites of DNA damage. The NuA4 complex plays a key role in hematopoietic stem cell maintenance and is required to maintain acetylated H2A.Z/H2AZ1 at MYC target genes. The NuA4 complex is also required for spermatid development by promoting acetylation of histones: histone hyperacetylation is required for histone replacement during the transition from round to elongating spermatids. Component of a SWR1-like complex that specifically mediates the removal of histone H2A.Z/H2AZ1 from the nucleosome. Also acetylates non-histone proteins, such as BMAL1, ATM, AURKB, CHKA, CGAS, ERCC4/XPF, LPIN1, TP53/p53, NDC80/HEC1, NR1D2, RAN, SOX4, FOXP3, SQSTM1, ULK1 and RUBCNL/Pacer. Directly acetylates and activates ATM. Promotes nucleotide excision repair (NER) by mediating acetylation of ERCC4/XPF, thereby promoting formation of the ERCC4-ERCC1 complex. Relieves NR1D2-mediated inhibition of APOC3 expression by acetylating NR1D2. Acts as a regulator of regulatory T-cells (Treg) by catalyzing FOXP3 acetylation, thereby promoting FOXP3 transcriptional repressor activity. Involved in skeletal myoblast differentiation by mediating acetylation of SOX4. Catalyzes acetylation of APBB1/FE65, increasing its transcription activator activity. Promotes transcription elongation during the activation phase of the circadian cycle by catalyzing acetylation of BMAL1, promoting elongation of circadian transcripts. Together with GSK3 (GSK3A or GSK3B), acts as a regulator of autophagy: phosphorylated at Ser-86 by GSK3 under starvation conditions, leading to activate acetyltransferase activity and promote acetylation of key autophagy regulators, such as ULK1 and RUBCNL/Pacer. Acts as a regulator of the cGAS-STING innate antiviral response by catalyzing acetylation the N-terminus of CGAS, thereby promoting CGAS DNA-binding and activation. Also regulates lipid metabolism by mediating acetylation of CHKA or LPIN1. Promotes lipolysis of lipid droplets following glucose deprivation by mediating acetylation of isoform 1 of CHKA, thereby promoting monomerization of CHKA and its conversion into a tyrosine-protein kinase. Acts as a regulator of fatty-acid-induced triacylglycerol synthesis by catalyzing acetylation of LPIN1, thereby promoting the synthesis of diacylglycerol. In addition to protein acetyltransferase, can use different acyl-CoA substrates, such as (2E)-butenoyl-CoA (crotonyl-CoA), S-lactoyl-CoA (lactyl-CoA) and 2-hydroxyisobutanoyl-CoA (2-hydroxyisobutyryl-CoA), and is able to mediate protein crotonylation, lactylation and 2-hydroxyisobutyrylation, respectively. Acts as a key regulator of chromosome segregation and kinetochore-microtubule attachment during mitosis by mediating acetylation or crotonylation of target proteins. Catalyzes acetylation of AURKB at kinetochores, increasing AURKB activity and promoting accurate chromosome segregation in mitosis. Acetylates RAN during mitosis, promoting microtubule assembly at mitotic chromosomes. Acetylates NDC80/HEC1 during mitosis, promoting robust kinetochore-microtubule attachment. Catalyzes crotonylation of MAPRE1/EB1, thereby ensuring accurate spindle positioning in mitosis. Catalyzes lactylation of NBN/NBS1 in response to DNA damage, thereby promoting DNA double-strand breaks (DSBs) via homologous recombination (HR). Functionally, (Microbial infection) Catalyzes the acetylation of flavivirus NS3 protein to modulate their RNA-binding and -unwinding activities leading to facilitate viral replication. The protein is Histone acetyltransferase KAT5 of Homo sapiens (Human).